Here is a 136-residue protein sequence, read N- to C-terminus: Transcription antitermination protein NusB (136 aa).

Belongs to the NusB family.

Involved in transcription antitermination. Required for transcription of ribosomal RNA (rRNA) genes. Binds specifically to the boxA antiterminator sequence of the ribosomal RNA (rrn) operons. This is Transcription antitermination protein NusB from Salinispora tropica (strain ATCC BAA-916 / DSM 44818 / JCM 13857 / NBRC 105044 / CNB-440).